A 140-amino-acid chain; its full sequence is Putative pre-16S rRNA nuclease (140 aa).

The protein belongs to the YqgF nuclease family.

It localises to the cytoplasm. Functionally, could be a nuclease involved in processing of the 5'-end of pre-16S rRNA. This chain is Putative pre-16S rRNA nuclease, found in Yersinia pseudotuberculosis serotype IB (strain PB1/+).